The sequence spans 54 residues: Conotoxin vc5a (54 aa).

Residues 1–14 (VILLLITSTPSVDA) form the signal peptide. Residues 15-42 (RLKAKDNMPLASFHDNAKRTLQTRLINT) constitute a propeptide that is removed on maturation. P49 is subject to 4-hydroxyproline. I53 carries the isoleucine amide modification.

Belongs to the conotoxin T superfamily. Contains 2 disulfide bonds that can be either 'C1-C3, C2-C4' or 'C1-C4, C2-C3', since these disulfide connectivities have been observed for conotoxins with cysteine framework V (for examples, see AC P0DQQ7 and AC P81755). As to expression, expressed by the venom duct.

Its subcellular location is the secreted. In Conus victoriae (Queen Victoria cone), this protein is Conotoxin vc5a.